The sequence spans 85 residues: Large ribosomal subunit protein bL27 (85 aa).

The tract at residues 1-20 (MATKKAGGSTRNGRDSEAKR) is disordered.

Belongs to the bacterial ribosomal protein bL27 family.

This Haemophilus influenzae (strain PittEE) protein is Large ribosomal subunit protein bL27.